Consider the following 493-residue polypeptide: Serine/threonine-protein kinase PBL34 (493 aa).

Disordered regions lie at residues 1–42 and 84–117; these read MGLD…EEEE and SKSA…TPVI. A lipid anchor (N-myristoyl glycine) is attached at glycine 2. Positions 12–37 are enriched in basic and acidic residues; the sequence is WKSEKPKETENKNHKKKNGDDNKSRN. The segment covering 100–114 has biased composition (low complexity); it reads SSTTTTSNAESSSST. Threonine 131 carries the phosphothreonine modification. The region spanning 142-428 is the Protein kinase domain; the sequence is FRPESLLGEG…VEALKPLPHL (287 aa). ATP contacts are provided by residues 148–156 and lysine 180; that span reads LGEGGFGCV. The residue at position 225 (tyrosine 225) is a Phosphotyrosine. Catalysis depends on aspartate 275, which acts as the Proton acceptor. Position 279 is a phosphoserine (serine 279). Threonine 306 bears the Phosphothreonine mark. Serine 309 is modified (phosphoserine). Threonine 310 and threonine 315 each carry phosphothreonine. A Phosphotyrosine modification is found at tyrosine 323. The disordered stretch occupies residues 447 to 493; sequence KNGSGRSQGFGSRNGQHQPVFRTLSSPHGSSPYRHQIPSPKPKGATT. The span at 450–475 shows a compositional bias: polar residues; sequence SGRSQGFGSRNGQHQPVFRTLSSPHG.

It belongs to the protein kinase superfamily. Ser/Thr protein kinase family. Interacts with the Xanthomonas campestris effector XopAC/AvrAC. Interacts with SD129. In terms of processing, phosphorylated by SD129 at Thr-306 and Thr-310 in response to the pathogen-associated molecular pattern (PAMP) 3-OH-C10:0, a medium-chain 3-hydroxy fatty acid.

It localises to the cell membrane. It carries out the reaction L-seryl-[protein] + ATP = O-phospho-L-seryl-[protein] + ADP + H(+). The enzyme catalyses L-threonyl-[protein] + ATP = O-phospho-L-threonyl-[protein] + ADP + H(+). Its function is as follows. Involved in chitin-triggered immune signaling and is required for reactive oxygen species (ROS) production. Acts downstream of SD129 in defense signaling triggered by the pathogen-associated molecular pattern (PAMP) 3-OH-C10:0, a medium-chain 3-hydroxy fatty acid. This Arabidopsis thaliana (Mouse-ear cress) protein is Serine/threonine-protein kinase PBL34.